The following is a 690-amino-acid chain: Glycine--tRNA ligase beta subunit (690 aa).

It belongs to the class-II aminoacyl-tRNA synthetase family. In terms of assembly, tetramer of two alpha and two beta subunits.

It is found in the cytoplasm. It carries out the reaction tRNA(Gly) + glycine + ATP = glycyl-tRNA(Gly) + AMP + diphosphate. The sequence is that of Glycine--tRNA ligase beta subunit from Buchnera aphidicola subsp. Acyrthosiphon pisum (strain 5A).